The primary structure comprises 329 residues: Probable alpha-1,2-galactosyltransferase gmh1 (329 aa).

The Cytoplasmic segment spans residues 1-14; sequence MLSFFTKNTLTKRK. A helical; Signal-anchor for type II membrane protein membrane pass occupies residues 15-35; that stretch reads LIMLALAIVFTFFAFGLYFIP. Over 36 to 329 the chain is Lumenal; sequence HDEISVFDFK…LWTKYKDKII (294 aa). N-linked (GlcNAc...) asparagine glycosylation is found at Asn-127 and Asn-169.

This sequence belongs to the glycosyltransferase 34 family.

Its subcellular location is the golgi apparatus membrane. This Schizosaccharomyces pombe (strain 972 / ATCC 24843) (Fission yeast) protein is Probable alpha-1,2-galactosyltransferase gmh1 (gmh1).